The sequence spans 703 residues: Glycine--tRNA ligase beta subunit (703 aa).

This sequence belongs to the class-II aminoacyl-tRNA synthetase family. Tetramer of two alpha and two beta subunits.

Its subcellular location is the cytoplasm. The enzyme catalyses tRNA(Gly) + glycine + ATP = glycyl-tRNA(Gly) + AMP + diphosphate. The sequence is that of Glycine--tRNA ligase beta subunit from Myxococcus xanthus (strain DK1622).